We begin with the raw amino-acid sequence, 274 residues long: Small nuclear ribonucleoprotein-associated protein B (274 aa).

The 81-residue stretch at 5–85 folds into the Sm domain; that stretch reads PKSSKMLQYI…VVSMSVEAPP (81 aa). The segment at 148-274 is disordered; the sequence is PGGGVPPPMG…PMGRGGFQRK (127 aa). Repeat unit 1 spans residues 162–171; sequence PPQGFPPGGP. Positions 162–265 are 6 X 10 AA repeats of P-P-Q-G-F-P-P-G-G-P; it reads PPQGFPPGGP…PPQGFPPGGP (104 aa). Residues 173 to 187 are compositionally biased toward low complexity; sequence PQGAFNNNPNNNNGG. 5 repeat units span residues 188 to 197, 204 to 213, 225 to 234, 241 to 250, and 256 to 265. A compositionally biased stretch (low complexity) spans 216–226; that stretch reads GPNLNNGNMPP. A compositionally biased stretch (gly residues) spans 265-274; sequence PMGRGGFQRK.

This sequence belongs to the snRNP SmB/SmN family.

The protein resides in the cytoplasm. It localises to the cytosol. Its subcellular location is the nucleus. Its function is as follows. Plays a role in pre-mRNA splicing as a core component of the spliceosomal U1, U2, U4 and U5 small nuclear ribonucleoproteins (snRNPs), the building blocks of the spliceosome. The protein is Small nuclear ribonucleoprotein-associated protein B (snrpb) of Dictyostelium discoideum (Social amoeba).